The sequence spans 126 residues: Protein ApaG (126 aa).

The region spanning 2–126 (TSLEDSIKVE…FRLAVPGMLH (125 aa)) is the ApaG domain.

The protein is Protein ApaG of Shewanella sediminis (strain HAW-EB3).